Reading from the N-terminus, the 636-residue chain is Nucleolin 2 (636 aa).

Disordered stretches follow at residues 1 to 386 (MGKS…SKTL), 458 to 481 (ANERGTPRNSNPGRKGEGSQSRTI), and 544 to 636 (SEIG…NDEE). Composition is skewed to basic and acidic residues over residues 43–63 (KELIDVVQKEKAEKTVPKKVE) and 76–89 (EKTKETPSKLKDES). Acidic residues predominate over residues 90 to 103 (SSEEEDDSSSDEEI). Positions 104–118 (APAKKRPEPIKKAKV) are enriched in basic and acidic residues. Acidic residues-rich tracts occupy residues 122–133 (SSDDDSTSDEET), 152–163 (SSDDDSSSDEET), and 182–193 (SSDDDSSSDEET). The span at 224–238 (TPAKKEPIVVKKDSS) shows a compositional bias: basic and acidic residues. Acidic residues-rich tracts occupy residues 267–278 (SSEEESSSDDEP), 299–311 (SSEEDSDEEESDD), and 331–341 (SSDESSDESDK). Over residues 342–367 (EESKDEKVTPKKKDSDVEMVDAEQKS) the composition is skewed to basic and acidic residues. Over residues 368-383 (NAKQPKTPTNQTQGGS) the composition is skewed to polar residues. RRM domains follow at residues 384-460 (KTLF…LANE) and 479-558 (RTIY…ESRP). The span at 464–481 (PRNSNPGRKGEGSQSRTI) shows a compositional bias: polar residues. 2 stretches are compositionally biased toward basic and acidic residues: residues 552–566 (HVEESRPRDSDEGRS) and 579–604 (RHSDRAPRGGRFSDRAPRGRHSDRGA). The segment covering 622–636 (MESSKGTKTVFNDEE) has biased composition (polar residues).

Interacts with THAL in the nucleus. As to expression, expressed at low levels in flower buds.

The protein localises to the nucleus. Its subcellular location is the nucleolus. In terms of biological role, involved in pre-rRNA processing and ribosome assembly. This chain is Nucleolin 2, found in Arabidopsis thaliana (Mouse-ear cress).